A 161-amino-acid polypeptide reads, in one-letter code: Transcription antitermination protein NusB (161 aa).

The segment at 1-22 (MNLSDFKPGEGTEVPEEEKSVS) is disordered.

This sequence belongs to the NusB family.

Its function is as follows. Involved in transcription antitermination. Required for transcription of ribosomal RNA (rRNA) genes. Binds specifically to the boxA antiterminator sequence of the ribosomal RNA (rrn) operons. The protein is Transcription antitermination protein NusB of Hydrogenovibrio crunogenus (strain DSM 25203 / XCL-2) (Thiomicrospira crunogena).